A 425-amino-acid polypeptide reads, in one-letter code: Kynurenine/alpha-aminoadipate aminotransferase, mitochondrial (425 aa).

The transit peptide at 1 to 29 (MNYSRFLTATSLARKTSPIRATVEIMSRA) directs the protein to the mitochondrion. Residue R20 participates in substrate binding. S40 carries the post-translational modification Phosphoserine. The substrate site is built by Y74 and Y142. K172 bears the N6-succinyllysine mark. The residue at position 179 (K179) is an N6-acetyllysine. Over residues 179-188 (KPEDSKDPTK) the composition is skewed to basic and acidic residues. Residues 179–208 (KPEDSKDPTKRTPKFLYTIPNGNNPTGNSL) are disordered. A compositionally biased stretch (polar residues) spans 198-208 (PNGNNPTGNSL). N202 provides a ligand contact to substrate. Residue K263 is modified to N6-(pyridoxal phosphate)lysine; alternate. Residues K263 and K339 each carry the N6-acetyllysine; alternate modification. An N6-succinyllysine; alternate mark is found at K263 and K339. K351 bears the N6-acetyllysine mark. K367 is modified (N6-acetyllysine; alternate). K367 carries the N6-succinyllysine; alternate modification. R399 contributes to the substrate binding site. N6-acetyllysine is present on K422.

It belongs to the class-I pyridoxal-phosphate-dependent aminotransferase family. As to quaternary structure, homodimer. Requires pyridoxal 5'-phosphate as cofactor. The N-terminus is blocked.

The protein resides in the mitochondrion. It carries out the reaction L-kynurenine + 2-oxoglutarate = kynurenate + L-glutamate + H2O. It catalyses the reaction L-2-aminoadipate + 2-oxoglutarate = 2-oxoadipate + L-glutamate. The enzyme catalyses glycine + 2-oxoglutarate = glyoxylate + L-glutamate. The catalysed reaction is L-kynurenine + glyoxylate = kynurenate + glycine + H2O. It carries out the reaction 3-hydroxy-L-kynurenine + glyoxylate = xanthurenate + glycine + H2O. It catalyses the reaction 2-oxohexanoate + L-kynurenine = L-2-aminohexanoate + kynurenate + H2O. The enzyme catalyses 3-phenylpyruvate + L-kynurenine = kynurenate + L-phenylalanine + H2O. The catalysed reaction is 4-methylsulfanyl-2-oxobutanoate + L-kynurenine = kynurenate + L-methionine + H2O. It carries out the reaction 2-oxo-3-sulfanylpropanoate + L-kynurenine = kynurenate + L-cysteine + H2O. It catalyses the reaction indole-3-pyruvate + L-kynurenine = kynurenate + L-tryptophan + H2O. The enzyme catalyses 2-oxopentanoate + L-kynurenine = L-2-aminopentanoate + kynurenate + H2O. The catalysed reaction is 4-methyl-2-oxopentanoate + L-kynurenine = kynurenate + L-leucine + H2O. It carries out the reaction glyoxylate + L-methionine = 4-methylsulfanyl-2-oxobutanoate + glycine. It catalyses the reaction L-2-aminoadipate + glyoxylate = 2-oxoadipate + glycine. The enzyme catalyses L-tyrosine + glyoxylate = 3-(4-hydroxyphenyl)pyruvate + glycine. The catalysed reaction is glyoxylate + L-phenylalanine = 3-phenylpyruvate + glycine. It carries out the reaction L-tryptophan + glyoxylate = indole-3-pyruvate + glycine. It catalyses the reaction L-leucine + glyoxylate = 4-methyl-2-oxopentanoate + glycine. The enzyme catalyses 2-oxobutanoate + L-kynurenine = (2S)-2-aminobutanoate + kynurenate + H2O. The catalysed reaction is 2-oxoadipate + L-kynurenine = L-2-aminoadipate + kynurenate + H2O. It carries out the reaction 2-oxoadipate + L-kynurenine = 4-(2-aminophenyl)-2,4-dioxobutanoate + L-2-aminoadipate. Its pathway is amino-acid degradation; L-lysine degradation via saccharopine pathway; glutaryl-CoA from L-lysine: step 4/6. Transaminase with broad substrate specificity. Has transaminase activity towards aminoadipate, kynurenine, methionine and glutamate. Shows activity also towards tryptophan, aspartate and hydroxykynurenine. Accepts a variety of oxo-acids as amino-group acceptors, with a preference for 2-oxoglutarate, 2-oxocaproic acid, phenylpyruvate and alpha-oxo-gamma-methiol butyric acid. Can also use glyoxylate as amino-group acceptor (in vitro). The sequence is that of Kynurenine/alpha-aminoadipate aminotransferase, mitochondrial from Rattus norvegicus (Rat).